The primary structure comprises 273 residues: Formamidopyrimidine-DNA glycosylase (273 aa).

The active-site Schiff-base intermediate with DNA is P2. The Proton donor role is filled by E3. The active-site Proton donor; for beta-elimination activity is the K60. 3 residues coordinate DNA: H94, R113, and K154. The FPG-type zinc finger occupies 239–273; the sequence is EAYGRTGEPCRRCGTPIERIVVAQRSTHICPVCQA. R263 functions as the Proton donor; for delta-elimination activity in the catalytic mechanism.

The protein belongs to the FPG family. In terms of assembly, monomer. The cofactor is Zn(2+).

It catalyses the reaction Hydrolysis of DNA containing ring-opened 7-methylguanine residues, releasing 2,6-diamino-4-hydroxy-5-(N-methyl)formamidopyrimidine.. It carries out the reaction 2'-deoxyribonucleotide-(2'-deoxyribose 5'-phosphate)-2'-deoxyribonucleotide-DNA = a 3'-end 2'-deoxyribonucleotide-(2,3-dehydro-2,3-deoxyribose 5'-phosphate)-DNA + a 5'-end 5'-phospho-2'-deoxyribonucleoside-DNA + H(+). Involved in base excision repair of DNA damaged by oxidation or by mutagenic agents. Acts as a DNA glycosylase that recognizes and removes damaged bases. Has a preference for oxidized purines, such as 7,8-dihydro-8-oxoguanine (8-oxoG). Has AP (apurinic/apyrimidinic) lyase activity and introduces nicks in the DNA strand. Cleaves the DNA backbone by beta-delta elimination to generate a single-strand break at the site of the removed base with both 3'- and 5'-phosphates. This chain is Formamidopyrimidine-DNA glycosylase, found in Herpetosiphon aurantiacus (strain ATCC 23779 / DSM 785 / 114-95).